A 699-amino-acid chain; its full sequence is Polyribonucleotide nucleotidyltransferase (699 aa).

Mg(2+) contacts are provided by aspartate 488 and aspartate 494. The KH domain maps to 555 to 614; it reads PRIYSIKVNPDKIKDVIGKGGSVIRSLTEETNTIIDIEDNGIIKIVALDYDKAKQAIRRI. Positions 624–692 constitute an S1 motif domain; that stretch reads GAVYTGKVSH…RQGRIRLSMK (69 aa).

This sequence belongs to the polyribonucleotide nucleotidyltransferase family. Component of the RNA degradosome, which is a multiprotein complex involved in RNA processing and mRNA degradation. Mg(2+) serves as cofactor.

The protein localises to the cytoplasm. It carries out the reaction RNA(n+1) + phosphate = RNA(n) + a ribonucleoside 5'-diphosphate. In terms of biological role, involved in mRNA degradation. Catalyzes the phosphorolysis of single-stranded polyribonucleotides processively in the 3'- to 5'-direction. The sequence is that of Polyribonucleotide nucleotidyltransferase from Blochmanniella pennsylvanica (strain BPEN).